The following is a 693-amino-acid chain: Elongation factor G (693 aa).

The tr-type G domain occupies 8-282 (EKTRNIGIMA…AVIDYLPSPL (275 aa)). Residues 17–24 (AHVDAGKT), 81–85 (DTPGH), and 135–138 (NKMD) contribute to the GTP site.

It belongs to the TRAFAC class translation factor GTPase superfamily. Classic translation factor GTPase family. EF-G/EF-2 subfamily.

The protein localises to the cytoplasm. Catalyzes the GTP-dependent ribosomal translocation step during translation elongation. During this step, the ribosome changes from the pre-translocational (PRE) to the post-translocational (POST) state as the newly formed A-site-bound peptidyl-tRNA and P-site-bound deacylated tRNA move to the P and E sites, respectively. Catalyzes the coordinated movement of the two tRNA molecules, the mRNA and conformational changes in the ribosome. In Streptococcus suis (strain 05ZYH33), this protein is Elongation factor G.